The chain runs to 473 residues: Probable glycine dehydrogenase (decarboxylating) subunit 2 (473 aa).

The disordered stretch occupies residues 1–40 (MEHYEQARYAPAEGETNEPLLSENDQTTVSVDPSLPDDLT). Residue K270 is modified to N6-(pyridoxal phosphate)lysine.

This sequence belongs to the GcvP family. C-terminal subunit subfamily. In terms of assembly, the glycine cleavage system is composed of four proteins: P, T, L and H. In this organism, the P 'protein' is a heterodimer of two subunits. It depends on pyridoxal 5'-phosphate as a cofactor.

It carries out the reaction N(6)-[(R)-lipoyl]-L-lysyl-[glycine-cleavage complex H protein] + glycine + H(+) = N(6)-[(R)-S(8)-aminomethyldihydrolipoyl]-L-lysyl-[glycine-cleavage complex H protein] + CO2. Its function is as follows. The glycine cleavage system catalyzes the degradation of glycine. The P protein binds the alpha-amino group of glycine through its pyridoxal phosphate cofactor; CO(2) is released and the remaining methylamine moiety is then transferred to the lipoamide cofactor of the H protein. In Halobacterium salinarum (strain ATCC 700922 / JCM 11081 / NRC-1) (Halobacterium halobium), this protein is Probable glycine dehydrogenase (decarboxylating) subunit 2.